The following is a 250-amino-acid chain: DNA repair protein RecO (250 aa).

The protein belongs to the RecO family.

Its function is as follows. Involved in DNA repair and RecF pathway recombination. This chain is DNA repair protein RecO, found in Thermodesulfovibrio yellowstonii (strain ATCC 51303 / DSM 11347 / YP87).